A 225-amino-acid chain; its full sequence is NAD(P)H-quinone oxidoreductase subunit K, chloroplastic (225 aa).

Residues Cys-43, Cys-44, Cys-108, and Cys-139 each contribute to the [4Fe-4S] cluster site.

This sequence belongs to the complex I 20 kDa subunit family. As to quaternary structure, NDH is composed of at least 16 different subunits, 5 of which are encoded in the nucleus. The cofactor is [4Fe-4S] cluster.

Its subcellular location is the plastid. It is found in the chloroplast thylakoid membrane. The catalysed reaction is a plastoquinone + NADH + (n+1) H(+)(in) = a plastoquinol + NAD(+) + n H(+)(out). It carries out the reaction a plastoquinone + NADPH + (n+1) H(+)(in) = a plastoquinol + NADP(+) + n H(+)(out). Its function is as follows. NDH shuttles electrons from NAD(P)H:plastoquinone, via FMN and iron-sulfur (Fe-S) centers, to quinones in the photosynthetic chain and possibly in a chloroplast respiratory chain. The immediate electron acceptor for the enzyme in this species is believed to be plastoquinone. Couples the redox reaction to proton translocation, and thus conserves the redox energy in a proton gradient. The polypeptide is NAD(P)H-quinone oxidoreductase subunit K, chloroplastic (Olimarabidopsis pumila (Dwarf rocket)).